Reading from the N-terminus, the 391-residue chain is Alpha-2B adrenergic receptor (391 aa).

The helical transmembrane segment at 1-25 (AIAAVITFLILFTIFGNALVILAVL) threads the bilayer. Residues 26–36 (TSRSLRAPQNL) lie on the Cytoplasmic side of the membrane. Residues 37-62 (FLVSLAAADILVATLIIPFSLANELL) traverse the membrane as a helical segment. Over 63 to 72 (GYWYFRRTWC) the chain is Extracellular. Cysteines 72 and 151 form a disulfide. Residues 73-95 (EVYLALDVLFCTSSIVHLCAISL) traverse the membrane as a helical segment. The Cytoplasmic portion of the chain corresponds to 96–117 (DRYWAVSRALEYNSKRTPRRIK). The helical transmembrane segment at 118-140 (CIILTVWLIAAVISLPPLIYKGD) threads the bilayer. Topologically, residues 141 to 156 (QGPQPRGRPQCKLNQE) are extracellular. The chain crosses the membrane as a helical span at residues 157–180 (AWYILASSIGSFFAPCLIMILVYL). Residues 181-355 (RIYLIAKRSH…LTREKRFTFV (175 aa)) are Cytoplasmic-facing. Disordered stretches follow at residues 194 to 218 (PRAK…APSS) and 233 to 312 (EANR…PLQQ). The segment covering 233–247 (EANRHSKSTGEKVEG) has biased composition (basic and acidic residues). The segment covering 256–266 (PGVPPSWPPLP) has biased composition (pro residues). The segment covering 271-281 (GQEEDIYRASP) has biased composition (basic and acidic residues). The segment covering 282–294 (EEEAGDDEEEECE) has biased composition (acidic residues). A compositionally biased stretch (low complexity) spans 295–309 (PQAVPVSPASACSPP). A helical transmembrane segment spans residues 356–379 (LAVVIGVFVLCWFPFFFSYSLGAI). Over 380–388 (CPQHCKVPH) the chain is Extracellular. A helical transmembrane segment spans residues 389 to 391 (GLF).

The protein belongs to the G-protein coupled receptor 1 family. Adrenergic receptor subfamily. ADRA2B sub-subfamily. In terms of assembly, interacts with RAB26. Interacts with PPP1R9B. Interacts with GGA1, GGA2 and GGA3.

Its subcellular location is the cell membrane. In terms of biological role, alpha-2 adrenergic receptors mediate the catecholamine-induced inhibition of adenylate cyclase through the action of G proteins. The protein is Alpha-2B adrenergic receptor (ADRA2B) of Erinaceus europaeus (Western European hedgehog).